Here is a 172-residue protein sequence, read N- to C-terminus: S-ribosylhomocysteine lyase (172 aa).

Fe cation is bound by residues His54, His58, and Cys128.

Belongs to the LuxS family. Homodimer. Fe cation serves as cofactor.

The catalysed reaction is S-(5-deoxy-D-ribos-5-yl)-L-homocysteine = (S)-4,5-dihydroxypentane-2,3-dione + L-homocysteine. In terms of biological role, involved in the synthesis of autoinducer 2 (AI-2) which is secreted by bacteria and is used to communicate both the cell density and the metabolic potential of the environment. The regulation of gene expression in response to changes in cell density is called quorum sensing. Catalyzes the transformation of S-ribosylhomocysteine (RHC) to homocysteine (HC) and 4,5-dihydroxy-2,3-pentadione (DPD). This Aliivibrio fischeri (strain MJ11) (Vibrio fischeri) protein is S-ribosylhomocysteine lyase.